Reading from the N-terminus, the 180-residue chain is Putative phycocyanobilin lyase CpcS 2 (180 aa).

The protein belongs to the CpcS/CpeS biliprotein lyase family.

In terms of biological role, covalently attaches a chromophore to Cys residue(s) of phycobiliproteins (Potential). In vitro does not act as a chromophore lyase for ApcA1, ApcA2, ApcB, ApcD, ApcF, CpcB or PecB, the lyase activity is therefore unsure. In Nostoc sp. (strain PCC 7120 / SAG 25.82 / UTEX 2576), this protein is Putative phycocyanobilin lyase CpcS 2 (cpeS2).